We begin with the raw amino-acid sequence, 347 residues long: Trace amine-associated receptor 4 (347 aa).

The Extracellular portion of the chain corresponds to 1-37 (MNSPDLWYSPETQFCFAAANNSCPRKARPALVVCAMY). An N-linked (GlcNAc...) asparagine glycan is attached at Asn20. 2 disulfides stabilise this stretch: Cys23–Cys187 and Cys106–Cys191. A helical transmembrane segment spans residues 38-58 (LVMIGAIVMTMLGNMVVIISI). Residues 59–69 (AHFKQLHSPTN) are Cytoplasmic-facing. A helical transmembrane segment spans residues 70–90 (FLILSMATTDFLLSCVVMPFS). At 91-110 (MVRSIESCWYFGDLFCKVHS) the chain is on the extracellular side. A helical membrane pass occupies residues 111–129 (CCDIMLCTTSIFHLCFISV). The Cytoplasmic portion of the chain corresponds to 130 to 149 (DRHYAVCDPLHYVTQITVGV). The helical transmembrane segment at 150–170 (VGVFLLISWSVPILFAFGLVF) threads the bilayer. The Extracellular portion of the chain corresponds to 171–197 (SELNLIGAEDFVAAIDCTGLCVLIFNK). The segment at 175–188 (LIGAEDFVAAIDCT) is extracellular Loop 2 (ECL2). A helical membrane pass occupies residues 198-218 (LWGVLASFIAFFLPGAIMVGI). Residues 219-260 (YIHIFTVARKHARKIGPGPRTKRALSESKMKATSGKESKATK) are Cytoplasmic-facing. The chain crosses the membrane as a helical span at residues 261–281 (TLSIVMGVFVLCWLPFFVLTI). At 282–296 (TDPFIGFTTPEDLYN) the chain is on the extracellular side. Residues 297–317 (VFLWLGYFNSTFNPIIYGMFY) form a helical membrane-spanning segment. At 318-347 (PWFRKALRMIVTGTIFRSDSSTSSLHPAHP) the chain is on the cytoplasmic side.

This sequence belongs to the G-protein coupled receptor 1 family.

Its subcellular location is the cell membrane. Olfactory receptor specific for 2-phenylethylamine, a trace amine present at high concentration in the urine of carnivore species, playing a key role in fear and avoidance responses. 2-phenylethylamine acts as a kairomone in the chemical detection of carnivore odor and triggers fear in rats. This receptor is probably mediated by the G(s)-class of G-proteins which activate adenylate cyclase. The polypeptide is Trace amine-associated receptor 4 (Rattus norvegicus (Rat)).